Here is a 1006-residue protein sequence, read N- to C-terminus: Probable protein phosphatase DDB_G0279461 (1006 aa).

Residues 1–12 (MMVPSLSTSISS) show a composition bias toward polar residues. Disordered stretches follow at residues 1 to 119 (MMVP…NNKE), 146 to 188 (SHAS…RSNS), 214 to 269 (SSED…NGIR), 312 to 387 (DAES…PPNQ), 459 to 513 (NINN…NNIQ), 525 to 563 (DYNIQEGNDINNDNYEIRVSNNDDDNDSSNNNNNNNSKF), and 604 to 642 (GSIPTDEDQNNNNNKNKNTTTTTTTTNTTTTTTTTTSAS). A compositionally biased stretch (acidic residues) spans 59-69 (NEEEGTADNEL). Positions 65-122 (ADNELESLMSLVNDNNNNNNNTSGIDDDNNNDIDDNNNNNNNNNNNNNNNNNNKEGLN) form a coiled coil. Residues 77-88 (NDNNNNNNNTSG) are compositionally biased toward low complexity. A compositionally biased stretch (acidic residues) spans 89 to 99 (IDDDNNNDIDD). Low complexity predominate over residues 100–117 (NNNNNNNNNNNNNNNNNN). A compositionally biased stretch (polar residues) spans 146–158 (SHASVSNQSSNGS). Composition is skewed to low complexity over residues 220–234 (SCHNSNNNNKNNKNN), 244–254 (NINNNNNNNCN), and 316–387 (NYNN…PPNQ). The stretch at 450–516 (KIDNLNKNIN…NNNNNIQDIQ (67 aa)) forms a coiled coil. Polar residues predominate over residues 466–481 (TDSQQPLPSIDVNFSH). Over residues 482 to 511 (NNNNNNNDNDNNNNNNNNNNNNNNNNNNNN) the composition is skewed to low complexity. The segment covering 525–538 (DYNIQEGNDINNDN) has biased composition (polar residues). Composition is skewed to low complexity over residues 552-561 (SSNNNNNNNS) and 613-639 (NNNNNKNKNTTTTTTTTNTTTTTTTTT). One can recognise a PPM-type phosphatase domain in the interval 744–1005 (DINKRGLKRA…DNISIIVVTL (262 aa)). Mn(2+) is bound by residues aspartate 784, glycine 785, aspartate 956, and aspartate 996.

This sequence in the C-terminal section; belongs to the PP2C family. Mg(2+) serves as cofactor. Requires Mn(2+) as cofactor.

The catalysed reaction is O-phospho-L-seryl-[protein] + H2O = L-seryl-[protein] + phosphate. It catalyses the reaction O-phospho-L-threonyl-[protein] + H2O = L-threonyl-[protein] + phosphate. This chain is Probable protein phosphatase DDB_G0279461, found in Dictyostelium discoideum (Social amoeba).